The primary structure comprises 171 residues: Small ribosomal subunit protein mS25 (171 aa).

Belongs to the mitochondrion-specific ribosomal protein mS25 family. As to quaternary structure, component of the mitochondrial ribosome small subunit (28S) which comprises a 12S rRNA and about 30 distinct proteins.

It localises to the mitochondrion. The sequence is that of Small ribosomal subunit protein mS25 (Mrps25) from Mus musculus (Mouse).